The chain runs to 238 residues: Ribosomal RNA small subunit methyltransferase G (238 aa).

S-adenosyl-L-methionine-binding positions include Gly77, Phe82, 128-129, and Arg147; that span reads AE. A disordered region spans residues 219 to 238; that stretch reads RQTPKKYPRKAGLPNKEPIE.

This sequence belongs to the methyltransferase superfamily. RNA methyltransferase RsmG family.

The protein resides in the cytoplasm. Specifically methylates the N7 position of guanine in position 535 of 16S rRNA. This is Ribosomal RNA small subunit methyltransferase G from Oceanobacillus iheyensis (strain DSM 14371 / CIP 107618 / JCM 11309 / KCTC 3954 / HTE831).